The following is a 227-amino-acid chain: Arginine ABC transporter permease protein ArtM (227 aa).

Residues I13 to L209 form the ABC transmembrane type-1 domain. 5 helical membrane passes run L17–L37, L51–G71, I78–L98, I155–G175, and L188–L208.

It belongs to the binding-protein-dependent transport system permease family. HisMQ subfamily. As to quaternary structure, the complex is composed of two ATP-binding proteins (ArtP), two transmembrane proteins (ArtM and ArtQ) and a solute-binding protein (ArtI).

The protein localises to the cell inner membrane. Part of the ABC transporter complex ArtPIQM involved in arginine transport. Probably responsible for the translocation of the substrate across the membrane. The protein is Arginine ABC transporter permease protein ArtM (artM) of Haemophilus influenzae (strain ATCC 51907 / DSM 11121 / KW20 / Rd).